Consider the following 108-residue polypeptide: UPF0060 membrane protein YE2027 (108 aa).

Helical transmembrane passes span 6 to 26 (LLFFVTALAEIIGCFLPYLWL), 29 to 49 (GASMWLLLPAAASLALFVWLL), 59 to 79 (VYAAYGGVYVATALIWLRVVD), and 85 to 105 (LFDWVGAAVALVGMLIIVAGW).

It belongs to the UPF0060 family.

It localises to the cell inner membrane. In Yersinia enterocolitica serotype O:8 / biotype 1B (strain NCTC 13174 / 8081), this protein is UPF0060 membrane protein YE2027.